A 1310-amino-acid chain; its full sequence is Major viral transcription factor ICP4 homolog (1310 aa).

3 disordered regions span residues 117 to 271 (AGAR…GPVE), 285 to 454 (GAKA…TPII), and 636 to 697 (GSSP…LLDK). Residues 341–350 (PVEKKPKSRE) are compositionally biased toward basic and acidic residues. Low complexity-rich tracts occupy residues 351-364 (FVSS…WGSS), 392-407 (PSPS…DGGS), and 648-666 (PSPT…SAAA). Residues 677–685 (RLRTPRKRK) carry the Nuclear localization signal motif. Residues Ser-686 and Ser-722 each carry the phosphoserine; by viral VZV ORF66 modification. 2 disordered regions span residues 1193–1258 (GTRF…SFGV) and 1282–1310 (ELLS…QSRG). The segment covering 1217-1227 (RTADDREHALE) has biased composition (basic and acidic residues). Residues 1228–1250 (LDDWEVGCEDAWDSEEGGGDDGD) are compositionally biased toward acidic residues.

This sequence belongs to the herpesviridae ICP4 family. As to quaternary structure, interacts with IE4 and IE63. Interacts with host USF1 and SP1. Post-translationally, phosphorylated by ORF66 protein kinase on Ser-686 and Ser-722. Also phosphorylated by ORF47 protein kinase and by human CSNK2A1/CKII.

The protein resides in the host nucleus. It is found in the host cytoplasm. The protein localises to the virion tegument. In terms of biological role, transcriptional transactivator. May interact with and recruit specific components of the general transcription machinery to viral promoters and stabilize their formation for transcription initiation. Negatively regulates its own transcription. This immediate early (EI) protein may be necessary in virion for viral pathogenesis. The protein is Major viral transcription factor ICP4 homolog of Homo sapiens (Human).